Here is a 445-residue protein sequence, read N- to C-terminus: Asparagine--tRNA ligase (445 aa).

This sequence belongs to the class-II aminoacyl-tRNA synthetase family. In terms of assembly, homodimer.

It localises to the cytoplasm. The catalysed reaction is tRNA(Asn) + L-asparagine + ATP = L-asparaginyl-tRNA(Asn) + AMP + diphosphate + H(+). The sequence is that of Asparagine--tRNA ligase from Deinococcus deserti (strain DSM 17065 / CIP 109153 / LMG 22923 / VCD115).